The chain runs to 184 residues: Ribosome-recycling factor (184 aa).

Residues 133 to 162 show a composition bias toward basic and acidic residues; the sequence is RDGMDNLKQDENKKEISEDERKRHETEVQK. The disordered stretch occupies residues 133–163; it reads RDGMDNLKQDENKKEISEDERKRHETEVQKL.

The protein belongs to the RRF family.

Its subcellular location is the cytoplasm. Its function is as follows. Responsible for the release of ribosomes from messenger RNA at the termination of protein biosynthesis. May increase the efficiency of translation by recycling ribosomes from one round of translation to another. In Sphingopyxis alaskensis (strain DSM 13593 / LMG 18877 / RB2256) (Sphingomonas alaskensis), this protein is Ribosome-recycling factor.